A 660-amino-acid chain; its full sequence is Kinesin-like protein KIF2A (660 aa).

Residues 1-140 (MVTSLNEDNE…QQELREKRAQ (140 aa)) form a disordered region. Positions 1–171 (MVTSLNEDNE…LDYRPLTTAD (171 aa)) are globular. Serine 48 carries the post-translational modification Phosphoserine. Phosphothreonine occurs at positions 51 and 70. At serine 73 the chain carries Phosphoserine. Lysine 75 carries the post-translational modification N6-acetyllysine. A compositionally biased stretch (polar residues) spans 96 to 106 (LPEQSSSAQQN). The segment covering 113–140 (CVKEVEKLQEKREKRRLQQQELREKRAQ) has biased composition (basic and acidic residues). Positions 177 to 507 (RICVCVRKRP…LRYANRVKEL (331 aa)) constitute a Kinesin motor domain. ATP is bound at residue 267–274 (GQTGSGKT). Positions 614–653 (ATQLEAILEQKIDILTELRDKVKSFRAALQEEEQASKQIN) form a coiled coil.

Belongs to the TRAFAC class myosin-kinesin ATPase superfamily. Kinesin family. MCAK/KIF2 subfamily. Interacts with AURKA and PLK1. Interacts with PSRC1. Interacts with MCRS1; the interaction enhances recruitment of KIF2A to the minus ends of spindle microtubules which promotes chromosome alignment.

The protein resides in the cytoplasm. It localises to the cytoskeleton. It is found in the microtubule organizing center. Its subcellular location is the centrosome. The protein localises to the spindle pole. The protein resides in the spindle. Functionally, plus end-directed microtubule-dependent motor required for normal brain development. May regulate microtubule dynamics during axonal growth. Required for normal progression through mitosis. Required for normal congress of chromosomes at the metaphase plate. Required for normal spindle dynamics during mitosis. Promotes spindle turnover. Implicated in formation of bipolar mitotic spindles. Has microtubule depolymerization activity. The polypeptide is Kinesin-like protein KIF2A (KIF2A) (Bos taurus (Bovine)).